We begin with the raw amino-acid sequence, 241 residues long: ATP synthase subunit a (241 aa).

Transmembrane regions (helical) follow at residues 30-50 (GQVF…ISLG), 91-111 (FIGT…LIPW), 128-148 (INTT…AGLS), 193-213 (LVVG…VMFL), and 214-234 (GLFT…YYIG).

The protein belongs to the ATPase A chain family. In terms of assembly, F-type ATPases have 2 components, CF(1) - the catalytic core - and CF(0) - the membrane proton channel. CF(1) has five subunits: alpha(3), beta(3), gamma(1), delta(1), epsilon(1). CF(0) has four main subunits: a, b, b' and c.

The protein resides in the cellular thylakoid membrane. Functionally, key component of the proton channel; it plays a direct role in the translocation of protons across the membrane. The chain is ATP synthase subunit a from Prochlorococcus marinus (strain MIT 9301).